A 454-amino-acid chain; its full sequence is MSNLPSEPEFEQAYKELAYTLENSSLFQKHPEYRTALAVASIPERVIQFRVVWEDDNGNVQVNRGYRVQFNSALGPYKGGLRLHPSVNLSILKFLGFEQIFKNALTGLSMGGGKGGADFDPKGKSDAEIRRFCCAFMAELHKHIGADTDVPAGDIGVGGREIGYMFGAYRKAANRFEGVLTGKGLSWGGSLIRPEATGYGLVYYVGHMLEYSGAGSYAGKRVALSGSGNVAQYAALKLIELGATVVSLSDSKGALVATGESGITVEDINAIMAIKEARQSLTTFQHAGHVKWIEGARPWLHVGKVDIALPCATQNEVSKEEAEGLLAAGCKFVAEGSNMGCTLEAIEVFENNRKEKKGEAVWYAPGKAANCGGVAVSGLEMAQNSQRLNWTQAEVDEKLKDIMKNAFFNGLNTAKTYAEAAEGELPSLVAGSNIAGFVKVPQAMHDQGDWWSKN.

Residue serine 2 is modified to N-acetylserine. Lysine 114 is a catalytic residue.

The protein belongs to the Glu/Leu/Phe/Val dehydrogenases family. In terms of assembly, homohexamer.

It carries out the reaction L-glutamate + NADP(+) + H2O = 2-oxoglutarate + NH4(+) + NADPH + H(+). The chain is NADP-specific glutamate dehydrogenase (GDH) from Neurospora sitophila (Chrysonilia sitophila).